Reading from the N-terminus, the 212-residue chain is Peptide methionine sulfoxide reductase MsrA (212 aa).

Cys52 is a catalytic residue.

This sequence belongs to the MsrA Met sulfoxide reductase family.

It catalyses the reaction L-methionyl-[protein] + [thioredoxin]-disulfide + H2O = L-methionyl-(S)-S-oxide-[protein] + [thioredoxin]-dithiol. The enzyme catalyses [thioredoxin]-disulfide + L-methionine + H2O = L-methionine (S)-S-oxide + [thioredoxin]-dithiol. Has an important function as a repair enzyme for proteins that have been inactivated by oxidation. Catalyzes the reversible oxidation-reduction of methionine sulfoxide in proteins to methionine. The polypeptide is Peptide methionine sulfoxide reductase MsrA (Salmonella agona (strain SL483)).